Here is a 3148-residue protein sequence, read N- to C-terminus: Huntingtin (3148 aa).

HEAT repeat units follow at residues 149–186 and 191–228; these read PYLV…ALGH and GEIK…HSRR. Composition is skewed to polar residues over residues 428–451, 475–486, and 516–526; these read QQPR…SSEQ, SRSSSCGANITP, and PSDSSQTTTEG. 2 disordered regions span residues 428–532 and 557–622; these read QQPR…SAVT and QDEE…NKMS. Residues 602-621 show a composition bias toward basic and acidic residues; the sequence is SVDRFIPKDEPPEPEPDNKM. 2 HEAT repeats span residues 760 to 797 and 861 to 898; these read LSLV…SLCG and LQER…RLFF. Composition is skewed to low complexity over residues 1025-1042 and 1105-1115; these read TLSV…TTSS and SSSSTNTSGGT. 3 disordered regions span residues 1025–1047, 1098–1117, and 1158–1215; these read TLSV…VDPE, WAGE…GTHK, and GPPV…GSTA. Residues 1201–1215 are compositionally biased toward polar residues; that stretch reads EANTGRPTESTGSTA. Residues 1419 to 1456 form an HEAT 5 repeat; the sequence is LFEPLVIKALKQYTTSTSVALQRQVLDLLAQLVQLRVN. Over residues 1712–1730 the composition is skewed to polar residues; that stretch reads PNLSPSDQPAGDGQQNQEP. Disordered regions lie at residues 1712 to 1735 and 2072 to 2091; these read PNLS…GEAQ and VSDT…DGDP. The segment covering 2072-2084 has biased composition (low complexity); sequence VSDTSSPSTPVTS. A Nuclear export signal motif is present at residues 2398-2407; the sequence is IIISLSRLPL. Acidic residues predominate over residues 2639-2649; the sequence is EWGEDEDDEAD. Residues 2639–2664 are disordered; the sequence is EWGEDEDDEADPPAPTSPPLSPINSR. Pro residues predominate over residues 2650–2659; sequence PPAPTSPPLS.

This sequence belongs to the huntingtin family.

The protein localises to the cytoplasm. It is found in the nucleus. Functionally, may play a role in microtubule-mediated transport or vesicle function. In Takifugu rubripes (Japanese pufferfish), this protein is Huntingtin (htt).